Consider the following 513-residue polypeptide: 2,3-bisphosphoglycerate-independent phosphoglycerate mutase (513 aa).

Mn(2+) contacts are provided by Asp-12 and Ser-62. Ser-62 (phosphoserine intermediate) is an active-site residue. Residues His-123, 153–154, Arg-185, Arg-191, 260–263, and Lys-333 contribute to the substrate site; these read RD and RPDR. Residues Asp-400, His-404, Asp-441, His-442, and His-460 each contribute to the Mn(2+) site.

This sequence belongs to the BPG-independent phosphoglycerate mutase family. In terms of assembly, monomer. Requires Mn(2+) as cofactor.

The enzyme catalyses (2R)-2-phosphoglycerate = (2R)-3-phosphoglycerate. Its pathway is carbohydrate degradation; glycolysis; pyruvate from D-glyceraldehyde 3-phosphate: step 3/5. In terms of biological role, catalyzes the interconversion of 2-phosphoglycerate and 3-phosphoglycerate. In Clostridium tetani (strain Massachusetts / E88), this protein is 2,3-bisphosphoglycerate-independent phosphoglycerate mutase.